The sequence spans 292 residues: Tyrosine isonitrile desaturase (292 aa).

Fe cation is bound by residues His-110, Asp-112, and His-259.

This sequence belongs to the TfdA dioxygenase family. Requires Fe(2+) as cofactor.

The catalysed reaction is (2S)-3-(4-hydroxyphenyl)-2-isocyanopropanoate + 2-oxoglutarate + O2 = (2E)-3-(4-hydroxyphenyl)-2-isocyanoprop-2-enoate + succinate + CO2 + H2O. In terms of biological role, catalyzes the 2-oxoglutarate-dependent oxidation of tyrosine isonitrile. This Erwinia amylovora (strain CFBP1430) protein is Tyrosine isonitrile desaturase.